Reading from the N-terminus, the 172-residue chain is Lipopolysaccharide export system protein LptA (172 aa).

A signal peptide spans 1-23 (MKLVSNKILFLATMVLASSSAFA).

It belongs to the LptA family. Component of the lipopolysaccharide transport and assembly complex.

Its subcellular location is the periplasm. Functionally, involved in the assembly of lipopolysaccharide (LPS). Required for the translocation of LPS from the inner membrane to the outer membrane. May form a bridge between the inner membrane and the outer membrane, via interactions with LptC and LptD, thereby facilitating LPS transfer across the periplasm. The sequence is that of Lipopolysaccharide export system protein LptA from Haemophilus influenzae (strain ATCC 51907 / DSM 11121 / KW20 / Rd).